We begin with the raw amino-acid sequence, 514 residues long: 2,3-bisphosphoglycerate-independent phosphoglycerate mutase (514 aa).

Residues Asp14 and Ser64 each coordinate Mn(2+). Ser64 serves as the catalytic Phosphoserine intermediate. Residues His125, 155 to 156, Arg187, Arg193, 263 to 266, and Lys336 contribute to the substrate site; these read RD and RADR. Mn(2+) is bound by residues Asp403, His407, Asp444, His445, and His463.

This sequence belongs to the BPG-independent phosphoglycerate mutase family. As to quaternary structure, monomer. Mn(2+) serves as cofactor.

The enzyme catalyses (2R)-2-phosphoglycerate = (2R)-3-phosphoglycerate. Its pathway is carbohydrate degradation; glycolysis; pyruvate from D-glyceraldehyde 3-phosphate: step 3/5. Catalyzes the interconversion of 2-phosphoglycerate and 3-phosphoglycerate. This is 2,3-bisphosphoglycerate-independent phosphoglycerate mutase from Shewanella pealeana (strain ATCC 700345 / ANG-SQ1).